Consider the following 153-residue polypeptide: Natriuretic peptides A (153 aa).

The signal sequence occupies residues 1–25 (MGSFSTIMASFLLFLAFQLQGQTRA). Propeptides lie at residues 26 to 123 (NPVY…AAPR) and 93 to 103 (DGGALGRGSWD). A disordered region spans residues 54 to 105 (EDEVMPPQVLSDQSEEERAALSPLPEVPPWTGEVNPAQRDGGALGRGSWDSS). Ser-129 carries the phosphoserine modification. The cysteines at positions 130 and 146 are disulfide-linked. An important for degradation of atrial natriuretic peptide by IDE region spans residues 147–151 (NSFRY).

This sequence belongs to the natriuretic peptide family. Homodimer; disulfide-linked antiparallel dimer. The precursor molecule is proteolytically cleaved by CORIN at Arg-123 to produce the atrial natriuretic peptide. Undergoes further proteolytic cleavage by unknown proteases to give rise to long-acting natriuretic peptide, vessel dilator and kaliuretic peptide. Additional processing gives rise to the auriculin and atriopeptin peptides. In the kidneys, alternative processing by an unknown protease results in the peptide urodilatin. Post-translationally, cleavage by MME initiates degradation of the factor and thereby regulates its activity. Degradation by IDE results in reduced activation of NPR1 (in vitro). During IDE degradation, the resulting products can temporarily stimulate NPR2 to produce cGMP, before the fragments are completely degraded and inactivated by IDE (in vitro). In terms of processing, degraded by IDE. Phosphorylation on Ser-129 decreases vasorelaxant activity.

The protein localises to the secreted. The protein resides in the perikaryon. It is found in the cell projection. Its function is as follows. Hormone that plays a key role in mediating cardio-renal homeostasis, and is involved in vascular remodeling and regulating energy metabolism. Acts by specifically binding and stimulating NPR1 to produce cGMP, which in turn activates effector proteins, such as PRKG1, that drive various biological responses. Regulates vasodilation, natriuresis, diuresis and aldosterone synthesis and is therefore essential for regulating blood pressure, controlling the extracellular fluid volume and maintaining the fluid-electrolyte balance. Also involved in inhibiting cardiac remodeling and cardiac hypertrophy by inducing cardiomyocyte apoptosis and attenuating the growth of cardiomyocytes and fibroblasts. Plays a role in female pregnancy by promoting trophoblast invasion and spiral artery remodeling in uterus, and thus prevents pregnancy-induced hypertension. In adipose tissue, acts in various cGMP- and PKG-dependent pathways to regulate lipid metabolism and energy homeostasis. This includes up-regulating lipid metabolism and mitochondrial oxygen utilization by activating the AMP-activated protein kinase (AMPK), and increasing energy expenditure by acting via MAPK11 to promote the UCP1-dependent thermogenesis of brown adipose tissue. Binds the clearance receptor NPR3 which removes the hormone from circulation. In terms of biological role, may have a role in cardio-renal homeostasis through regulation of natriuresis, diuresis, vasodilation, and inhibiting aldosterone synthesis. In vitro, promotes the production of cGMP and induces vasodilation. May promote natriuresis, at least in part, by enhancing prostaglandin E2 synthesis resulting in the inhibition of renal Na+-K+-ATPase. However reports on the involvement of this peptide in mammal blood volume and blood pressure homeostasis are conflicting; according to a report, in vivo it is not sufficient to activate cGMP and does not inhibit collecting duct transport nor effect diuresis and natriuresis. Appears to bind to specific receptors that are distinct from the receptors bound by atrial natriuretic peptide and vessel dilator. Possibly enhances protein excretion in urine by decreasing proximal tubular protein reabsorption. Functionally, may have a role in cardio-renal homeostasis through regulation of natriuresis, diuresis, and vasodilation. In vitro, promotes the production of cGMP and induces vasodilation. May promote natriuresis, at least in part, by enhancing prostaglandin E2 synthesis resulting in the inhibition of renal Na+-K+-ATPase. However reports on the involvement of this peptide in mammal blood volume and blood pressure homeostasis are conflicting; according to a report it is not sufficient to activate cGMP and does not inhibit collecting duct transport nor effect diuresis and natriuresis. Appears to bind to specific receptors that are distinct from the receptors bound by the atrial natriuretic and long-acting natriuretic peptides. Possibly functions in protein excretion in urine by maintaining the integrity of the proximal tubules and enhancing protein excretion by decreasing proximal tubular protein reabsorption. May have a role in cardio-renal homeostasis through regulation of diuresis and inhibiting aldosterone synthesis. In vitro, promotes the production of cGMP and induces vasodilation. May promote natriuresis, at least in part, by enhancing prostaglandin E2 synthesis resulting in the inhibition of renal Na+-K+-ATPase. May have a role in potassium excretion but not sodium excretion (natriuresis). Possibly enhances protein excretion in urine by decreasing proximal tubular protein reabsorption. Its function is as follows. Hormone produced in the kidneys that appears to be important for maintaining cardio-renal homeostasis. Mediates vasodilation, natriuresis and diuresis primarily in the renal system, in order to maintain the extracellular fluid volume and control the fluid-electrolyte balance. Specifically binds and stimulates cGMP production by renal transmembrane receptors, likely NPR1. Urodilatin not ANP, may be the natriuretic peptide responsible for the regulation of sodium and water homeostasis in the kidney. In terms of biological role, may have a role in cardio-renal homeostasis through regulation of natriuresis and vasodilation. In vivo promotes natriuresis and in vitro, vasodilates renal artery strips. Functionally, may have a role in cardio-renal homeostasis through regulation of regulation of natriuresis and vasodilation. In vivo promotes natriuresis. In vitro, vasodilates intestinal smooth muscle but not smooth muscle strips. May have a role in cardio-renal homeostasis through regulation of natriuresis and vasodilation. In vivo promotes natriuresis. In vitro, selectively vasodilates intestinal and vascular smooth muscle strips. Its function is as follows. May have a role in cardio-renal homeostasis through regulation of natriuresis and vasodilation. In vivo promotes natriuresis. In vitro, selectively vasodilates intestinal smooth muscle but not vascular smooth muscle strips. This chain is Natriuretic peptides A (NPPA), found in Equus caballus (Horse).